The sequence spans 131 residues: MKKTTLLNQALSEVVAGMGHGDLLVIGDYGLPCPKGVRRIDLALRPGIPAFLDVVETILAELQVEAAVVARETAERNPAVQEGLTRLLGGVPVTTVSHEELKEISARAVALVRTGECTPYANVILRAGVTF.

Histidine 20 functions as the Proton donor in the catalytic mechanism. Substrate-binding positions include aspartate 28, histidine 98, and 120–122 (YAN).

Belongs to the RbsD / FucU family. RbsD subfamily. Homodecamer.

It localises to the cytoplasm. It catalyses the reaction beta-D-ribopyranose = beta-D-ribofuranose. Its pathway is carbohydrate metabolism; D-ribose degradation; D-ribose 5-phosphate from beta-D-ribopyranose: step 1/2. Its function is as follows. Catalyzes the interconversion of beta-pyran and beta-furan forms of D-ribose. The protein is D-ribose pyranase of Symbiobacterium thermophilum (strain DSM 24528 / JCM 14929 / IAM 14863 / T).